The following is a 78-amino-acid chain: Large ribosomal subunit protein bL28 (78 aa).

This sequence belongs to the bacterial ribosomal protein bL28 family.

The polypeptide is Large ribosomal subunit protein bL28 (Pseudomonas aeruginosa (strain LESB58)).